A 38-amino-acid polypeptide reads, in one-letter code: Photosystem II reaction center protein L (38 aa).

The helical transmembrane segment at serine 17–phenylalanine 37 threads the bilayer.

The protein belongs to the PsbL family. PSII is composed of 1 copy each of membrane proteins PsbA, PsbB, PsbC, PsbD, PsbE, PsbF, PsbH, PsbI, PsbJ, PsbK, PsbL, PsbM, PsbT, PsbX, PsbY, PsbZ, Psb30/Ycf12, at least 3 peripheral proteins of the oxygen-evolving complex and a large number of cofactors. It forms dimeric complexes.

The protein resides in the plastid. It localises to the chloroplast thylakoid membrane. Functionally, one of the components of the core complex of photosystem II (PSII). PSII is a light-driven water:plastoquinone oxidoreductase that uses light energy to abstract electrons from H(2)O, generating O(2) and a proton gradient subsequently used for ATP formation. It consists of a core antenna complex that captures photons, and an electron transfer chain that converts photonic excitation into a charge separation. This subunit is found at the monomer-monomer interface and is required for correct PSII assembly and/or dimerization. The chain is Photosystem II reaction center protein L from Chaetosphaeridium globosum (Charophycean green alga).